The following is a 462-amino-acid chain: Ubiquitin carboxyl-terminal hydrolase calypso (462 aa).

A UCH catalytic domain is found at 29–260 (GWLELESDPG…IRFNLMAVVP (232 aa)). The active-site Nucleophile is the C115. The active-site Proton donor is H197. The ULD domain occupies 357 to 385 (NYDKFICTFLTMLAHQGVLGELVSQHLLP). Positions 387–462 (KKISGQSAAN…KGRNKCRKRK (76 aa)) are positively charged C-terminal tail required for binding nucleosomes. Residues 394 to 462 (AANRLNKQNS…KGRNKCRKRK (69 aa)) form a disordered region. Positions 399 to 447 (NKQNSAAASTANSSAGATAGGAKSQQQQQQQQQPQQPQTPKNGKSPGKT) are enriched in low complexity. The segment covering 448-462 (PGRRRKGRNKCRKRK) has biased composition (basic residues).

The protein belongs to the peptidase C12 family. BAP1 subfamily. As to quaternary structure, catalytic component of the polycomb repressive deubiquitinase (PR-DUB) complex, at least composed of caly/calypso, Asx and sba (MBD5/6 homolog). The PR-DUB complex associates with nucleosomes to mediate deubiquitination of histone H2AK118ub1 substrates; the association requires the positively charged C-terminal tail of caly, probably due to direct binding of DNA. Interacts (via ULD domain) with Asx (via DEUBAD domain); the interaction produces a stable heterodimer with a composite binding site for ubiquitin. Homodimerizes (via coiled-coil hinge-region between the UCH and ULD domains) to mediate assembly of 2 copies of the caly-Asx heterodimer into a bisymmetric tetramer; dimerization enhances PR-DUB association with nucleosomes.

The protein resides in the nucleus. The catalysed reaction is Thiol-dependent hydrolysis of ester, thioester, amide, peptide and isopeptide bonds formed by the C-terminal Gly of ubiquitin (a 76-residue protein attached to proteins as an intracellular targeting signal).. Catalytic component of the polycomb repressive deubiquitinase (PR-DUB) complex, a complex that specifically mediates deubiquitination of histone H2A monoubiquitinated at 'Lys-119' (H2AK118ub1). Mediates bisymmetric organization of the PR-DUB complex and is involved in association with nucleosomes to mediate deubiquitination. Does not deubiquitinate monoubiquitinated histone H2B. Required to maintain the transcriptionally repressive state of homeotic genes throughout development. The PR-DUB complex has weak or no activity toward 'Lys-48'- and 'Lys-63'-linked polyubiquitin chains. Polycomb group (PcG) protein. In Drosophila virilis (Fruit fly), this protein is Ubiquitin carboxyl-terminal hydrolase calypso.